The primary structure comprises 176 residues: Zinc finger protein 428 (176 aa).

Residues 1–152 form a disordered region; sequence MTETREPTET…EEEGGTYHCT (152 aa). Residues 16–46 are compositionally biased toward acidic residues; sequence LEEDDEDLSPEPDSEEEEEEEEEETTDDPEY. Thr-96 is modified (phosphothreonine). Residues 126-138 show a composition bias toward basic and acidic residues; it reads PSRTGETRPAGRD. Residues 149–171 form a C2H2-type zinc finger; sequence YHCTECEDSFDNLGELHGHFMLH.

The polypeptide is Zinc finger protein 428 (Znf428) (Mus musculus (Mouse)).